We begin with the raw amino-acid sequence, 61 residues long: Small ribosomal subunit protein uS14 (61 aa).

Zn(2+) is bound by residues C24, C27, C40, and C43.

Belongs to the universal ribosomal protein uS14 family. Zinc-binding uS14 subfamily. As to quaternary structure, part of the 30S ribosomal subunit. Contacts proteins S3 and S10. Zn(2+) is required as a cofactor.

Functionally, binds 16S rRNA, required for the assembly of 30S particles and may also be responsible for determining the conformation of the 16S rRNA at the A site. The chain is Small ribosomal subunit protein uS14 from Clostridioides difficile (strain 630) (Peptoclostridium difficile).